Consider the following 141-residue polypeptide: Putative pre-16S rRNA nuclease (141 aa).

The protein belongs to the YqgF nuclease family.

It localises to the cytoplasm. In terms of biological role, could be a nuclease involved in processing of the 5'-end of pre-16S rRNA. The polypeptide is Putative pre-16S rRNA nuclease (Acetivibrio thermocellus (strain ATCC 27405 / DSM 1237 / JCM 9322 / NBRC 103400 / NCIMB 10682 / NRRL B-4536 / VPI 7372) (Clostridium thermocellum)).